The primary structure comprises 130 residues: Protein NrdI (130 aa).

Belongs to the NrdI family.

Its function is as follows. Probably involved in ribonucleotide reductase function. The polypeptide is Protein NrdI (Staphylococcus carnosus (strain TM300)).